Consider the following 350-residue polypeptide: Ornithine cyclodeaminase (350 aa).

L-ornithine contacts are provided by Arg-45 and Lys-69. NAD(+) is bound by residues Thr-84, Arg-112, 139–140 (AQ), Asp-161, Thr-202, 225–228 (VGGD), Lys-232, and Ser-293. Position 112 (Arg-112) interacts with L-ornithine. Asp-228 is a binding site for L-ornithine. The Proton donor/acceptor role is filled by Asp-228. L-ornithine is bound at residue Val-294. Lys-331 is a binding site for NAD(+).

It belongs to the ornithine cyclodeaminase/mu-crystallin family. In terms of assembly, homodimer. The cofactor is NAD(+).

It catalyses the reaction L-ornithine = L-proline + NH4(+). Its pathway is amino-acid biosynthesis; L-proline biosynthesis; L-proline from L-ornithine: step 1/1. Functionally, catalyzes the conversion of L-ornithine into L-proline with release of ammonia. Is likely involved in the L-ornithine degradation pathway that allows P.putida to utilize this compound as sole carbon and nitrogen source. The chain is Ornithine cyclodeaminase from Pseudomonas putida (strain ATCC 47054 / DSM 6125 / CFBP 8728 / NCIMB 11950 / KT2440).